A 498-amino-acid chain; its full sequence is Early growth response protein 1 (498 aa).

Disordered stretches follow at residues 137 to 203 and 287 to 308; these read NASP…TASI and PSRM…RPYA. Positions 139–163 are enriched in low complexity; sequence SPSSAPSSSPSSSSSSSQSPPLSCS. A compositionally biased stretch (polar residues) spans 179–202; that stretch reads FPNSSPELFPDQSPQPFQNASTAS. 3 C2H2-type zinc fingers span residues 307-331, 337-359, and 365-387; these read YACP…IRIH, FQCR…IRTH, and FACD…TKIH. Residues 378 to 422 form a disordered region; it reads DERKRHTKIHLRQKDKKADKATPVSVASPVSSYSPSASTSYPSPV. A compositionally biased stretch (basic residues) spans 382-392; that stretch reads RHTKIHLRQKD. Residues 398-422 show a composition bias toward low complexity; it reads ATPVSVASPVSSYSPSASTSYPSPV.

Belongs to the EGR C2H2-type zinc-finger protein family.

Its subcellular location is the nucleus. The protein localises to the cytoplasm. Transcriptional regulator. Recognizes and binds to the DNA sequence 5'-GCG(T/G)GGGCG-3'(EGR-site) in the promoter region of target genes. Binds double-stranded target DNA, irrespective of the cytosine methylation status. Regulates the transcription of numerous target genes, and thereby plays an important role in regulating the response to growth factors, DNA damage, and ischemia. Plays a role in the regulation of cell survival, proliferation and cell death. Mediates responses to ischemia and hypoxia; regulates the expression of proteins that are involved in inflammatory processes. Plays a role in regulating the expression of circadian clock genes. This is Early growth response protein 1 from Xenopus tropicalis (Western clawed frog).